The primary structure comprises 239 residues: Cytochrome c oxidase subunit 2 (239 aa).

Over 1-26 the chain is Mitochondrial intermembrane; sequence MATPAQLGLMDAASPVMEEMIYFHDH. Residues 27–48 traverse the membrane as a helical segment; that stretch reads VMLVLILITCLIFYSMLVLISS. The Mitochondrial matrix portion of the chain corresponds to 49-62; that stretch reads KYIYRFLTDGHVIE. Residues 63-82 form a helical membrane-spanning segment; it reads TVWTVIPAIILVVVALPSLK. Topologically, residues 83 to 239 are mitochondrial intermembrane; that stretch reads LLYLTDELDN…ESLGSLNMKR (157 aa). Cu cation contacts are provided by H161, C196, E198, C200, H204, and M207. Position 198 (E198) interacts with Mg(2+).

Belongs to the cytochrome c oxidase subunit 2 family. Component of the cytochrome c oxidase (complex IV, CIV), a multisubunit enzyme composed of a catalytic core of 3 subunits and several supernumerary subunits. The complex exists as a monomer or a dimer and forms supercomplexes (SCs) in the inner mitochondrial membrane with ubiquinol-cytochrome c oxidoreductase (cytochrome b-c1 complex, complex III, CIII). It depends on Cu cation as a cofactor.

The protein resides in the mitochondrion inner membrane. It carries out the reaction 4 Fe(II)-[cytochrome c] + O2 + 8 H(+)(in) = 4 Fe(III)-[cytochrome c] + 2 H2O + 4 H(+)(out). Component of the cytochrome c oxidase, the last enzyme in the mitochondrial electron transport chain which drives oxidative phosphorylation. The respiratory chain contains 3 multisubunit complexes succinate dehydrogenase (complex II, CII), ubiquinol-cytochrome c oxidoreductase (cytochrome b-c1 complex, complex III, CIII) and cytochrome c oxidase (complex IV, CIV), that cooperate to transfer electrons derived from NADH and succinate to molecular oxygen, creating an electrochemical gradient over the inner membrane that drives transmembrane transport and the ATP synthase. Cytochrome c oxidase is the component of the respiratory chain that catalyzes the reduction of oxygen to water. Electrons originating from reduced cytochrome c in the intermembrane space (IMS) are transferred via the dinuclear copper A center (CU(A)) of subunit 2 and heme A of subunit 1 to the active site in subunit 1, a binuclear center (BNC) formed by heme A3 and copper B (CU(B)). The BNC reduces molecular oxygen to 2 water molecules using 4 electrons from cytochrome c in the IMS and 4 protons from the mitochondrial matrix. This Branchiostoma lanceolatum (Common lancelet) protein is Cytochrome c oxidase subunit 2 (COII).